The chain runs to 252 residues: Imidazole glycerol phosphate synthase subunit HisF (252 aa).

Active-site residues include aspartate 11 and aspartate 130.

This sequence belongs to the HisA/HisF family. In terms of assembly, heterodimer of HisH and HisF.

The protein resides in the cytoplasm. The enzyme catalyses 5-[(5-phospho-1-deoxy-D-ribulos-1-ylimino)methylamino]-1-(5-phospho-beta-D-ribosyl)imidazole-4-carboxamide + L-glutamine = D-erythro-1-(imidazol-4-yl)glycerol 3-phosphate + 5-amino-1-(5-phospho-beta-D-ribosyl)imidazole-4-carboxamide + L-glutamate + H(+). The protein operates within amino-acid biosynthesis; L-histidine biosynthesis; L-histidine from 5-phospho-alpha-D-ribose 1-diphosphate: step 5/9. In terms of biological role, IGPS catalyzes the conversion of PRFAR and glutamine to IGP, AICAR and glutamate. The HisF subunit catalyzes the cyclization activity that produces IGP and AICAR from PRFAR using the ammonia provided by the HisH subunit. This chain is Imidazole glycerol phosphate synthase subunit HisF, found in Persephonella marina (strain DSM 14350 / EX-H1).